Consider the following 394-residue polypeptide: Putative fimbrial assembly protein FimD, serogroup D (394 aa).

The protein is Putative fimbrial assembly protein FimD, serogroup D (fimD) of Dichelobacter nodosus (Bacteroides nodosus).